Reading from the N-terminus, the 325-residue chain is Peroxidase 45 (325 aa).

Positions 1 to 25 are cleaved as a signal peptide; the sequence is MEKNTSQTIFSNFFLLLLLSSCVSA. Cystine bridges form between C36-C115, C69-C74, C121-C321, and C200-C232. H67 serves as the catalytic Proton acceptor. Ca(2+)-binding residues include D68, V71, G73, D75, and S77. Residue P163 participates in substrate binding. Residue H193 participates in heme b binding. T194 contacts Ca(2+). Residues D245, S248, and D253 each coordinate Ca(2+).

It belongs to the peroxidase family. Classical plant (class III) peroxidase subfamily. Heme b serves as cofactor. Requires Ca(2+) as cofactor. In terms of tissue distribution, slightly expressed in roots.

It localises to the secreted. The catalysed reaction is 2 a phenolic donor + H2O2 = 2 a phenolic radical donor + 2 H2O. Removal of H(2)O(2), oxidation of toxic reductants, biosynthesis and degradation of lignin, suberization, auxin catabolism, response to environmental stresses such as wounding, pathogen attack and oxidative stress. These functions might be dependent on each isozyme/isoform in each plant tissue. The sequence is that of Peroxidase 45 (PER45) from Arabidopsis thaliana (Mouse-ear cress).